The following is a 503-amino-acid chain: ATP synthase subunit alpha (503 aa).

170 to 177 (GDRQTGKT) contributes to the ATP binding site.

It belongs to the ATPase alpha/beta chains family. As to quaternary structure, F-type ATPases have 2 components, CF(1) - the catalytic core - and CF(0) - the membrane proton channel. CF(1) has five subunits: alpha(3), beta(3), gamma(1), delta(1), epsilon(1). CF(0) has three main subunits: a(1), b(2) and c(9-12). The alpha and beta chains form an alternating ring which encloses part of the gamma chain. CF(1) is attached to CF(0) by a central stalk formed by the gamma and epsilon chains, while a peripheral stalk is formed by the delta and b chains.

The protein localises to the cell inner membrane. It carries out the reaction ATP + H2O + 4 H(+)(in) = ADP + phosphate + 5 H(+)(out). Functionally, produces ATP from ADP in the presence of a proton gradient across the membrane. The alpha chain is a regulatory subunit. The sequence is that of ATP synthase subunit alpha from Thermotoga neapolitana (strain ATCC 49049 / DSM 4359 / NBRC 107923 / NS-E).